Here is a 248-residue protein sequence, read N- to C-terminus: 1-(5-phosphoribosyl)-5-[(5-phosphoribosylamino)methylideneamino] imidazole-4-carboxamide isomerase (248 aa).

Residue Asp8 is the Proton acceptor of the active site. The active-site Proton donor is the Asp127.

The protein belongs to the HisA/HisF family.

It is found in the cytoplasm. The catalysed reaction is 1-(5-phospho-beta-D-ribosyl)-5-[(5-phospho-beta-D-ribosylamino)methylideneamino]imidazole-4-carboxamide = 5-[(5-phospho-1-deoxy-D-ribulos-1-ylimino)methylamino]-1-(5-phospho-beta-D-ribosyl)imidazole-4-carboxamide. The protein operates within amino-acid biosynthesis; L-histidine biosynthesis; L-histidine from 5-phospho-alpha-D-ribose 1-diphosphate: step 4/9. This is 1-(5-phosphoribosyl)-5-[(5-phosphoribosylamino)methylideneamino] imidazole-4-carboxamide isomerase from Thermotoga neapolitana (strain ATCC 49049 / DSM 4359 / NBRC 107923 / NS-E).